The chain runs to 420 residues: Methyltransferase/ribosomally synthesized cyclic peptide gymnopeptides precursor gymMA1 (420 aa).

A methyltransferase domain region spans residues 1–251 (MQSSTQKQAG…GISTFYIPPK (251 aa)). Residues Arg-72, Tyr-76, and Tyr-98 contribute to the active site. The S-adenosyl-L-methionine site is built by Tyr-98, His-100, Val-103, Ala-130, Gln-172, Ala-213, Ser-244, and Thr-245. Residues 252–378 (ELKDPSMDIM…WALRCAMKKM (127 aa)) form a clasp domain region. The segment at 379-392 (PSSFMDEVDANNLP) is precursor leader. Val-394 and Val-396 each carry N-methylvaline. The residue at position 398 (Gly-398) is an N-methylglycine. N-methylvaline is present on Val-399. N-methylalanine is present on Ala-400. At Gly-402 the chain carries N-methylglycine. N-methylvaline occurs at positions 404, 406, 408, and 410.

This sequence in the N-terminal section; belongs to the precorrin methyltransferase family. In terms of assembly, homodimer. In terms of processing, gymMA1 automethylates at Val-394, Val-396, Gly-398, Val-399, Ala-400, Gly-402, Val-404, Val-406, Val-408 and Val-410 before being processed by a prolyloligopeptidase which likely forms a peptidyl ester upon removal of the follower propeptide, which then undergoes macrocyclization with the N-terminus of the modified core peptide. Peptide backbone alpha-N-methylations change the physicochemical properties of amide bonds to provide structural constraints and other favorable characteristics including biological membrane permeability to peptides.

Its pathway is mycotoxin biosynthesis. Functionally, fusion protein of the methyltransferase gymM1 and the gymnopeptides precursor; part of the gene cluster that mediates the biosynthesis of gymnopeptides, highly methylated cyclic octadecapeptides with striking antiproliferative activity on several human cancer cell lines. Gymnopeptides derive from the C-terminus of the gymMA1 protein, and it is the gymMA1 protein that methylates its own C-terminus using S-adenosyl methionine (SAM). The C-terminus is subsequently cleaved off and macrocyclized by a prolyloligopeptidase to give the final product. In Gymnopus fusipes (Spindle toughshank), this protein is Methyltransferase/ribosomally synthesized cyclic peptide gymnopeptides precursor gymMA1.